The primary structure comprises 344 residues: L-rhamnose-proton symporter (344 aa).

A run of 10 helical transmembrane segments spans residues 4–24 (AITM…CFYA), 38–58 (WSVG…AILL), 72–92 (TLLP…NYGL), 101–121 (MGIG…TPIL), 137–157 (TLLG…AGQL), 175–195 (LVLA…MNAA), 214–234 (LPSY…FCFI), 259–279 (VLLS…YAWG), 290–310 (MSWM…GLVL), and 321–341 (VGVL…VGLG).

Belongs to the L-rhamnose transporter (TC 2.A.7.6) family.

Its subcellular location is the cell inner membrane. The catalysed reaction is L-rhamnopyranose(in) + H(+)(in) = L-rhamnopyranose(out) + H(+)(out). In terms of biological role, uptake of L-rhamnose across the cytoplasmic membrane with the concomitant transport of protons into the cell (symport system). In Enterobacter sp. (strain 638), this protein is L-rhamnose-proton symporter.